Reading from the N-terminus, the 452-residue chain is UPF0210 protein Csac_1314 (452 aa).

Belongs to the UPF0210 family. Homodimer.

This chain is UPF0210 protein Csac_1314, found in Caldicellulosiruptor saccharolyticus (strain ATCC 43494 / DSM 8903 / Tp8T 6331).